The chain runs to 257 residues: Imidazole glycerol phosphate synthase subunit HisF (257 aa).

Catalysis depends on residues Asp-11 and Asp-130.

This sequence belongs to the HisA/HisF family. In terms of assembly, heterodimer of HisH and HisF.

The protein localises to the cytoplasm. The catalysed reaction is 5-[(5-phospho-1-deoxy-D-ribulos-1-ylimino)methylamino]-1-(5-phospho-beta-D-ribosyl)imidazole-4-carboxamide + L-glutamine = D-erythro-1-(imidazol-4-yl)glycerol 3-phosphate + 5-amino-1-(5-phospho-beta-D-ribosyl)imidazole-4-carboxamide + L-glutamate + H(+). The protein operates within amino-acid biosynthesis; L-histidine biosynthesis; L-histidine from 5-phospho-alpha-D-ribose 1-diphosphate: step 5/9. Its function is as follows. IGPS catalyzes the conversion of PRFAR and glutamine to IGP, AICAR and glutamate. The HisF subunit catalyzes the cyclization activity that produces IGP and AICAR from PRFAR using the ammonia provided by the HisH subunit. The sequence is that of Imidazole glycerol phosphate synthase subunit HisF from Aeromonas hydrophila subsp. hydrophila (strain ATCC 7966 / DSM 30187 / BCRC 13018 / CCUG 14551 / JCM 1027 / KCTC 2358 / NCIMB 9240 / NCTC 8049).